Reading from the N-terminus, the 60-residue chain is Large ribosomal subunit protein uL30 (60 aa).

The protein belongs to the universal ribosomal protein uL30 family. Part of the 50S ribosomal subunit.

This chain is Large ribosomal subunit protein uL30, found in Idiomarina loihiensis (strain ATCC BAA-735 / DSM 15497 / L2-TR).